We begin with the raw amino-acid sequence, 254 residues long: Sec-independent protein translocase protein TatC (254 aa).

6 consecutive transmembrane segments (helical) span residues 40-60 (IFLSLGAVLVGVVACFIFVKP), 82-104 (FFFVSVKVAGYSGILVMSPFILY), 125-145 (VVLGSSVLFFAGLGFAYYALI), 172-192 (FVLLLMFSTGLAFQIPIIQVV), 210-230 (FVILGAMVLGAILTPSTDPLT), and 233-253 (LLAGAVLGLYFGGIGCVRLLG).

The protein belongs to the TatC family. As to quaternary structure, forms a complex with TatA.

Its subcellular location is the cell inner membrane. Part of the twin-arginine translocation (Tat) system that transports large folded proteins containing a characteristic twin-arginine motif in their signal peptide across membranes. This is Sec-independent protein translocase protein TatC from Synechocystis sp. (strain ATCC 27184 / PCC 6803 / Kazusa).